A 290-amino-acid polypeptide reads, in one-letter code: MSGPVTEAARAKINLTLRVLGKRADGYHELQSLVVFAQSGDRLTAREADELRLDVAGRFAAALQGEPDNLVLRAARMLREETGIKSGAHLTLEKNLPVASGIGGGSADAAAALRALTALWGVAPGDEVLSRIAAALGADVLVCLHSRTAMMWGKGEKIMPLADLPRFWLVLANAGIALSTAAVFRELAAAPLAAAPSDPAPVPPGTLDDLAAWLAAEGNDLEPPALTLAPEIGETISALALTAGCLLARMSGSGATCFGLYAAEEEAREAALVLQAAHPGWWLEVSAAGG.

Lysine 12 is an active-site residue. 97-107 (PVASGIGGGSA) contacts ATP. The active site involves aspartate 139.

The protein belongs to the GHMP kinase family. IspE subfamily.

The catalysed reaction is 4-CDP-2-C-methyl-D-erythritol + ATP = 4-CDP-2-C-methyl-D-erythritol 2-phosphate + ADP + H(+). The protein operates within isoprenoid biosynthesis; isopentenyl diphosphate biosynthesis via DXP pathway; isopentenyl diphosphate from 1-deoxy-D-xylulose 5-phosphate: step 3/6. Functionally, catalyzes the phosphorylation of the position 2 hydroxy group of 4-diphosphocytidyl-2C-methyl-D-erythritol. This Parvibaculum lavamentivorans (strain DS-1 / DSM 13023 / NCIMB 13966) protein is 4-diphosphocytidyl-2-C-methyl-D-erythritol kinase.